We begin with the raw amino-acid sequence, 432 residues long: 3-phosphoshikimate 1-carboxyvinyltransferase (432 aa).

Residues K23, S24, and R28 each contribute to the 3-phosphoshikimate site. K23 contributes to the phosphoenolpyruvate binding site. Residues G95 and R123 each contribute to the phosphoenolpyruvate site. Residues S167, Q169, D317, and K344 each coordinate 3-phosphoshikimate. Q169 serves as a coordination point for phosphoenolpyruvate. Residue D317 is the Proton acceptor of the active site. Phosphoenolpyruvate contacts are provided by R348 and R390.

It belongs to the EPSP synthase family. As to quaternary structure, monomer.

It localises to the cytoplasm. It carries out the reaction 3-phosphoshikimate + phosphoenolpyruvate = 5-O-(1-carboxyvinyl)-3-phosphoshikimate + phosphate. It functions in the pathway metabolic intermediate biosynthesis; chorismate biosynthesis; chorismate from D-erythrose 4-phosphate and phosphoenolpyruvate: step 6/7. Functionally, catalyzes the transfer of the enolpyruvyl moiety of phosphoenolpyruvate (PEP) to the 5-hydroxyl of shikimate-3-phosphate (S3P) to produce enolpyruvyl shikimate-3-phosphate and inorganic phosphate. This is 3-phosphoshikimate 1-carboxyvinyltransferase from Staphylococcus aureus (strain bovine RF122 / ET3-1).